A 660-amino-acid polypeptide reads, in one-letter code: Glycine betaine transporter (660 aa).

Topologically, residues Met1–Asn13 are cytoplasmic. The chain crosses the membrane as a helical span at residues Pro14–Ala34. Topologically, residues Pro35–Ser52 are periplasmic. Residues Phe53–Cys73 form a helical membrane-spanning segment. Residues Ser74–Ser93 are Cytoplasmic-facing. A helical transmembrane segment spans residues Ser94–Ala114. Topologically, residues Glu115–Arg139 are periplasmic. A helical transmembrane segment spans residues Val140–Leu160. Residues Ser161 to Thr195 are Cytoplasmic-facing. A helical membrane pass occupies residues Phe196–Ile216. The Periplasmic segment spans residues Ser217–Ser230. The chain crosses the membrane as a helical span at residues Phe231–Gly251. The Cytoplasmic portion of the chain corresponds to Leu252–Asn263. A helical transmembrane segment spans residues Leu264–Leu284. Over Gln285 to Gly316 the chain is Periplasmic. The helical transmembrane segment at Trp317–Ala337 threads the bilayer. Residues Arg338–Glu347 are Cytoplasmic-facing. A helical transmembrane segment spans residues Phe348–Gly368. Over Asn369–Ser401 the chain is Periplasmic. The chain crosses the membrane as a helical span at residues Leu402–Thr422. Residues Ser423–Arg446 lie on the Cytoplasmic side of the membrane. The chain crosses the membrane as a helical span at residues Leu447 to Thr467. At Ala468 to Ser471 the chain is on the periplasmic side. Residues Ala472–Ile492 traverse the membrane as a helical segment. Over Lys493–Asn660 the chain is Cytoplasmic.

Belongs to the BCCT transporter (TC 2.A.15) family.

It is found in the cell inner membrane. With respect to regulation, uptake is activated by NaCl, KCl or mannose gradients across the cell membrane. Inhibited by the protonophore 3,3',4',5-tetrachlorosalicylanilide (TCS). Functionally, energy-dependent uptake of glycine betaine in response to high salinity. The chain is Glycine betaine transporter from Acinetobacter baylyi (strain ATCC 33305 / BD413 / ADP1).